Reading from the N-terminus, the 288-residue chain is MAAEITSTDYIAHHLTNWTYGYLPGEGWKVAHTAKEAGEMGFMAIHLDSMLWSIGLGIVFCALFWLVAKKATAGVPGKLQAAIEMIVEFVDTNVRDSYNGTSKLIAPLALTIFVWIFLMNLMDLMPIDYIPVLAQKVGAAMGHDPHHVFFKIVPTTDPNITLGMSFSVFALIIYYSIKEKGLGGFVGELTLHPFSAKNPIAKIILIPINFILEFVTLIAKPISLGLRLFGNMYAGELIFVLIALMPFWIQWALSVPWAIFHILIITLQAFVFMMLTIVYLSLASQTEH.

Transmembrane regions (helical) follow at residues Leu47 to Val67, Leu104 to Leu124, Asp157 to Ile177, Pro199 to Ala219, Leu237 to Trp257, and Ala258 to Val278.

It belongs to the ATPase A chain family. In terms of assembly, F-type ATPases have 2 components, CF(1) - the catalytic core - and CF(0) - the membrane proton channel. CF(1) has five subunits: alpha(3), beta(3), gamma(1), delta(1), epsilon(1). CF(0) has three main subunits: a(1), b(2) and c(9-12). The alpha and beta chains form an alternating ring which encloses part of the gamma chain. CF(1) is attached to CF(0) by a central stalk formed by the gamma and epsilon chains, while a peripheral stalk is formed by the delta and b chains.

It is found in the cell inner membrane. In terms of biological role, key component of the proton channel; it plays a direct role in the translocation of protons across the membrane. This Psychrobacter sp. (strain PRwf-1) protein is ATP synthase subunit a.